The sequence spans 258 residues: CDP-diacylglycerol pyrophosphatase (258 aa).

The chain crosses the membrane as a helical span at residues 10-30; sequence YLLTLLILIILAAGLIYKLRF.

The protein belongs to the Cdh family.

It localises to the cell inner membrane. The enzyme catalyses a CDP-1,2-diacyl-sn-glycerol + H2O = a 1,2-diacyl-sn-glycero-3-phosphate + CMP + 2 H(+). It functions in the pathway phospholipid metabolism; CDP-diacylglycerol degradation; phosphatidate from CDP-diacylglycerol: step 1/1. In Yersinia pestis, this protein is CDP-diacylglycerol pyrophosphatase (cdh).